The following is a 534-amino-acid chain: Cytochrome P450 714B1 (534 aa).

Met1 is a topological domain (lumenal). A helical; Signal-anchor for type III membrane protein transmembrane segment spans residues 2 to 22; sequence VVVVAAAMAAASLCCGVAAYL. The Cytoplasmic segment spans residues 23–534; the sequence is YYVLWLAPER…RSKCDWAGFD (512 aa). Cys472 is a heme binding site.

The protein belongs to the cytochrome P450 family. Heme is required as a cofactor. Highly expressed in spikelet and uppermost internode. Detected in shoots, roots, leaves and anthers.

Its subcellular location is the membrane. Functionally, catalyzes the 13-hydroxylation of gibberellins (GAs). Determines the ratio of GA4 and GA1. Converts GA12 into GA53. The protein is Cytochrome P450 714B1 (CYP714B1) of Oryza sativa subsp. japonica (Rice).